Here is a 627-residue protein sequence, read N- to C-terminus: Chaperone protein HtpG (627 aa).

The segment at 1–343 (MATQEFQAET…SEDLSLNISR (343 aa)) is a; substrate-binding. The segment at 344-553 (EMLQQDKQLK…EGEISIEMEK (210 aa)) is b. Residues 554 to 627 (VLQSMPNNQN…YTNNVCKIMS (74 aa)) form a c region.

Belongs to the heat shock protein 90 family. As to quaternary structure, homodimer.

Its subcellular location is the cytoplasm. Molecular chaperone. Has ATPase activity. This chain is Chaperone protein HtpG, found in Natranaerobius thermophilus (strain ATCC BAA-1301 / DSM 18059 / JW/NM-WN-LF).